The following is a 234-amino-acid chain: Glucosamine-6-phosphate deaminase (234 aa).

Catalysis depends on Asp63, which acts as the Proton acceptor; for enolization step. Asn129 functions as the For ring-opening step in the catalytic mechanism. His131 functions as the Proton acceptor; for ring-opening step in the catalytic mechanism. The active-site For ring-opening step is Glu136.

This sequence belongs to the glucosamine/galactosamine-6-phosphate isomerase family. NagB subfamily.

It catalyses the reaction alpha-D-glucosamine 6-phosphate + H2O = beta-D-fructose 6-phosphate + NH4(+). It participates in amino-sugar metabolism; N-acetylneuraminate degradation; D-fructose 6-phosphate from N-acetylneuraminate: step 5/5. Catalyzes the reversible isomerization-deamination of glucosamine 6-phosphate (GlcN6P) to form fructose 6-phosphate (Fru6P) and ammonium ion. This is Glucosamine-6-phosphate deaminase from Listeria monocytogenes serotype 4a (strain HCC23).